Here is a 314-residue protein sequence, read N- to C-terminus: DNA-directed RNA polymerase subunit alpha (314 aa).

The segment at 1–228 (MIEIEKPKIE…EHLNIFVGLT (228 aa)) is alpha N-terminal domain (alpha-NTD). Residues 246 to 314 (EKVLEMTIEE…ELGLGLRKDD (69 aa)) form an alpha C-terminal domain (alpha-CTD) region.

Belongs to the RNA polymerase alpha chain family. As to quaternary structure, homodimer. The RNAP catalytic core consists of 2 alpha, 1 beta, 1 beta' and 1 omega subunit. When a sigma factor is associated with the core the holoenzyme is formed, which can initiate transcription.

The catalysed reaction is RNA(n) + a ribonucleoside 5'-triphosphate = RNA(n+1) + diphosphate. Its function is as follows. DNA-dependent RNA polymerase catalyzes the transcription of DNA into RNA using the four ribonucleoside triphosphates as substrates. In Bacillus velezensis (strain DSM 23117 / BGSC 10A6 / LMG 26770 / FZB42) (Bacillus amyloliquefaciens subsp. plantarum), this protein is DNA-directed RNA polymerase subunit alpha.